The primary structure comprises 137 residues: Fluoride-specific ion channel FluC 4 (137 aa).

The next 4 helical transmembrane spans lie at 20 to 40 (AAIG…ILGA), 43 to 63 (LWGT…FATL), 83 to 103 (GLCG…LLVL), and 110 to 130 (ALAY…LGLI). Positions 86 and 89 each coordinate Na(+).

The protein belongs to the fluoride channel Fluc/FEX (TC 1.A.43) family.

Its subcellular location is the cell inner membrane. It catalyses the reaction fluoride(in) = fluoride(out). Na(+) is not transported, but it plays an essential structural role and its presence is essential for fluoride channel function. Functionally, fluoride-specific ion channel. Important for reducing fluoride concentration in the cell, thus reducing its toxicity. The sequence is that of Fluoride-specific ion channel FluC 4 from Brucella suis biovar 1 (strain 1330).